The following is a 1599-amino-acid chain: Protein TOPAZ1 (1599 aa).

Disordered regions lie at residues 1–42 (MVAQ…KESL), 159–185 (GCMH…TDPS), 802–836 (PNVA…VPDP), and 867–889 (VTHE…SSDL). Composition is skewed to basic and acidic residues over residues 168–183 (SKSK…DKTD) and 805–832 (AEEH…RELP). Residues 874-884 (NEKPGGLSEQT) are compositionally biased toward polar residues.

Expressed in both adult testis and fetal ovary, mostly in germ cells (at protein level).

The protein resides in the cytoplasm. The protein localises to the cytosol. Important for normal spermatogenesis and male fertility. Specifically required for progression to the post-meiotic stages of spermatocyte development. Seems to be necessary for normal expression levels of a number of testis-expressed gene transcripts, although its role in this process is unclear. The protein is Protein TOPAZ1 (TOPAZ1) of Ovis aries (Sheep).